Here is a 750-residue protein sequence, read N- to C-terminus: Neprilysin (750 aa).

Polar residues predominate over residues 1-14; it reads MGKSESQMDITDIN. The tract at residues 1 to 20 is disordered; it reads MGKSESQMDITDINTPKPKK. A lipid anchor (N-myristoyl glycine) is attached at G2. The Cytoplasmic segment spans residues 2-28; sequence GKSESQMDITDINTPKPKKKQRWTPLE. A phosphoserine mark is found at S4 and S6. The Stop-transfer sequence signature appears at 16–23; sequence PKPKKKQR. A helical; Signal-anchor for type II membrane protein transmembrane segment spans residues 29-51; that stretch reads ISLSVLVLLLTIIAVTMIALYAT. Residues 52-750 lie on the Extracellular side of the membrane; the sequence is YDDGICKSSD…MNPEKKCRVW (699 aa). In terms of domain architecture, Peptidase M13 spans 56-750; sequence ICKSSDCIKS…MNPEKKCRVW (695 aa). Disulfide bonds link C57/C62, C80/C735, C88/C695, C143/C411, C234/C242, and C621/C747. Position 103 (R103) interacts with a peptide. The N-linked (GlcNAc...) asparagine glycan is linked to N145. N-linked (GlcNAc...) asparagine glycans are attached at residues N285, N311, N325, and N335. A Zn(2+)-binding site is contributed by H584. E585 is a catalytic residue. Position 588 (H588) interacts with Zn(2+). A glycan (N-linked (GlcNAc...) asparagine) is linked at N628. Residue E647 participates in Zn(2+) binding. Residue D651 is the Proton donor of the active site.

It belongs to the peptidase M13 family. The cofactor is Zn(2+). Myristoylation is a determinant of membrane targeting. Post-translationally, glycosylation at Asn-628 is necessary both for surface expression and neutral endopeptidase activity.

Its subcellular location is the cell membrane. It carries out the reaction Preferential cleavage of polypeptides between hydrophobic residues, particularly with Phe or Tyr at P1'.. The enzyme catalyses substance P + H2O = substance P(1-9) + L-Leu-L-Met-NH2. The catalysed reaction is substance P + H2O = substance P(1-7) + L-Phe-Gly-L-Leu-L-Met-NH2. It catalyses the reaction neurotensin + H2O = neurotensin(1-11) + L-isoleucyl-L-leucine. It carries out the reaction neurotensin + H2O = neurotensin(1-10) + L-tyrosyl-L-isoleucyl-L-leucine. Its function is as follows. Thermolysin-like specificity, but is almost confined on acting on polypeptides of up to 30 amino acids. Biologically important in the destruction of opioid peptides such as Met- and Leu-enkephalins by cleavage of a Gly-Phe bond. Catalyzes cleavage of bradykinin, substance P and neurotensin peptides. Able to cleave angiotensin-1, angiotensin-2 and angiotensin 1-9. Involved in the degradation of atrial natriuretic factor (ANF) and brain natriuretic factor (BNP(1-32)). Displays UV-inducible elastase activity toward skin preelastic and elastic fibers. This chain is Neprilysin (MME), found in Pongo abelii (Sumatran orangutan).